A 260-amino-acid chain; its full sequence is uncharacterized protein (260 aa).

The protein belongs to the methyltransferase superfamily.

It localises to the cytoplasm. Its subcellular location is the nucleus. Functionally, probable methyltransferase. This is an uncharacterized protein from Schizosaccharomyces pombe (strain 972 / ATCC 24843) (Fission yeast).